Reading from the N-terminus, the 223-residue chain is Adenylate kinase (223 aa).

10-15 (GAGKGT) is a binding site for ATP. The interval 30-59 (STGDILRQAVKEGTEVGKIAGELMKAGKLI) is NMP. AMP contacts are provided by residues Thr-31, Arg-36, 57–59 (KLI), 85–88 (GFPR), and Gln-92. Positions 126–163 (GRYVCAQCGAGYHDEFKRPHKEGVCDICGSTEFKRRPD) are LID. Residue Arg-127 coordinates ATP. Cys-130, Cys-133, Cys-150, and Cys-153 together coordinate Zn(2+). Residues Arg-160 and Arg-172 each coordinate AMP. Leu-200 contacts ATP.

This sequence belongs to the adenylate kinase family. As to quaternary structure, monomer.

It is found in the cytoplasm. It carries out the reaction AMP + ATP = 2 ADP. Its pathway is purine metabolism; AMP biosynthesis via salvage pathway; AMP from ADP: step 1/1. In terms of biological role, catalyzes the reversible transfer of the terminal phosphate group between ATP and AMP. Plays an important role in cellular energy homeostasis and in adenine nucleotide metabolism. The polypeptide is Adenylate kinase (Zymomonas mobilis subsp. mobilis (strain ATCC 31821 / ZM4 / CP4)).